The following is a 261-amino-acid chain: Acetylglutamate kinase (261 aa).

Substrate contacts are provided by residues 41-42, Arg63, and Asn157; that span reads GG.

This sequence belongs to the acetylglutamate kinase family. ArgB subfamily.

The protein localises to the cytoplasm. The catalysed reaction is N-acetyl-L-glutamate + ATP = N-acetyl-L-glutamyl 5-phosphate + ADP. The protein operates within amino-acid biosynthesis; L-arginine biosynthesis; N(2)-acetyl-L-ornithine from L-glutamate: step 2/4. Catalyzes the ATP-dependent phosphorylation of N-acetyl-L-glutamate. The chain is Acetylglutamate kinase from Koribacter versatilis (strain Ellin345).